The sequence spans 191 residues: UPF0312 protein Sbal195_3198 (191 aa).

The N-terminal stretch at 1 to 22 (MKKQLFSALIGASLLAPMAASA) is a signal peptide.

Belongs to the UPF0312 family. Type 1 subfamily.

Its subcellular location is the periplasm. This is UPF0312 protein Sbal195_3198 from Shewanella baltica (strain OS195).